A 72-amino-acid chain; its full sequence is Cell division protein ZapB (72 aa).

A coiled-coil region spans residues 1–72 (MSLEILDQLE…RSLLGKIDNV (72 aa)). A disordered region spans residues 33-57 (KNNQSQQANDALRSENEQLKSEHQN). The segment covering 44 to 57 (LRSENEQLKSEHQN) has biased composition (basic and acidic residues).

The protein belongs to the ZapB family. As to quaternary structure, homodimer. The ends of the coiled-coil dimer bind to each other, forming polymers. Interacts with FtsZ.

Its subcellular location is the cytoplasm. Non-essential, abundant cell division factor that is required for proper Z-ring formation. It is recruited early to the divisome by direct interaction with FtsZ, stimulating Z-ring assembly and thereby promoting cell division earlier in the cell cycle. Its recruitment to the Z-ring requires functional FtsA or ZipA. This Pasteurella multocida (strain Pm70) protein is Cell division protein ZapB.